The primary structure comprises 419 residues: Adenylosuccinate synthetase (419 aa).

GTP contacts are provided by residues G11–K17 and G39–S41. D12 serves as the catalytic Proton acceptor. D12 and G39 together coordinate Mg(2+). Residues D12–K15, N37–H40, T129, R143, N221, T236, and R296 each bind IMP. H40 (proton donor) is an active-site residue. V292–R298 lines the substrate pocket. GTP-binding positions include R298, K324–D326, and G408–G410.

The protein belongs to the adenylosuccinate synthetase family. In terms of assembly, homodimer. It depends on Mg(2+) as a cofactor.

It is found in the cytoplasm. The enzyme catalyses IMP + L-aspartate + GTP = N(6)-(1,2-dicarboxyethyl)-AMP + GDP + phosphate + 2 H(+). Its pathway is purine metabolism; AMP biosynthesis via de novo pathway; AMP from IMP: step 1/2. Plays an important role in the de novo pathway and in the salvage pathway of purine nucleotide biosynthesis. Catalyzes the first committed step in the biosynthesis of AMP from IMP. This chain is Adenylosuccinate synthetase, found in Chaetomium globosum (strain ATCC 6205 / CBS 148.51 / DSM 1962 / NBRC 6347 / NRRL 1970) (Soil fungus).